A 287-amino-acid chain; its full sequence is Acetylglutamate kinase (287 aa).

Substrate contacts are provided by residues 70 to 71 (GG), Arg92, and Asn184.

This sequence belongs to the acetylglutamate kinase family. ArgB subfamily.

It is found in the cytoplasm. It carries out the reaction N-acetyl-L-glutamate + ATP = N-acetyl-L-glutamyl 5-phosphate + ADP. It participates in amino-acid biosynthesis; L-arginine biosynthesis; N(2)-acetyl-L-ornithine from L-glutamate: step 2/4. Its function is as follows. Catalyzes the ATP-dependent phosphorylation of N-acetyl-L-glutamate. This is Acetylglutamate kinase from Dinoroseobacter shibae (strain DSM 16493 / NCIMB 14021 / DFL 12).